Here is a 534-residue protein sequence, read N- to C-terminus: uncharacterized protein (534 aa).

Disordered regions lie at residues 1–150 (MSDS…DIPP), 252–284 (RRFRRREDNERNNSNSPRNFSTHGNGNGENGQP), and 383–434 (WKSQ…PSLP). The segment covering 8–67 (SQREDNYSRDRRSRFTEDSYSRRDSQRSGNEAPRESRYYRKEEHLQERSRSRSPARDSRW) has biased composition (basic and acidic residues). The segment covering 102–113 (SLQSTKATSSRT) has biased composition (polar residues). Pro residues predominate over residues 130–141 (PSAPAPPLPPSS). A compositionally biased stretch (basic and acidic residues) spans 252 to 262 (RRFRRREDNER). Residues 263 to 272 (NNSNSPRNFS) are compositionally biased toward low complexity. Residues 393 to 408 (NQGNRAYNPPNRNQAF) are compositionally biased toward polar residues.

This is an uncharacterized protein from Schizosaccharomyces pombe (strain 972 / ATCC 24843) (Fission yeast).